Consider the following 228-residue polypeptide: Ribonuclease 3 (228 aa).

One can recognise an RNase III domain in the interval 5-128 (LNRLMARLGY…IIGAMLLDGG (124 aa)). Mg(2+) is bound at residue E41. The active site involves D45. Mg(2+) is bound by residues D114 and E117. E117 is a catalytic residue. Positions 155-225 (DAKTRLQEWL…ASLALEWLEQ (71 aa)) constitute a DRBM domain.

This sequence belongs to the ribonuclease III family. In terms of assembly, homodimer. Requires Mg(2+) as cofactor.

The protein resides in the cytoplasm. It catalyses the reaction Endonucleolytic cleavage to 5'-phosphomonoester.. Its function is as follows. Digests double-stranded RNA. Involved in the processing of primary rRNA transcript to yield the immediate precursors to the large and small rRNAs (23S and 16S). Processes some mRNAs, and tRNAs when they are encoded in the rRNA operon. Processes pre-crRNA and tracrRNA of type II CRISPR loci if present in the organism. In Alcanivorax borkumensis (strain ATCC 700651 / DSM 11573 / NCIMB 13689 / SK2), this protein is Ribonuclease 3.